Reading from the N-terminus, the 444-residue chain is MRLSRYFLPILRETPKEAEIVSHRLMLRAGMIRQEAAGIYAWLPLGLRVLNRVVEVIRAEQDRSGAIELLMPTIQSAELWRESGRYEAYGKEMLRIRDRHEREMLFGPTNEEMITAIFRSAVRSYKDLPKSLYHIQWKFRDEVRPRFGTMRSREFLMKDAYSFDLDEAGARHAYNKMFVAYLRTFARLGLKAIPMRAETGPIGGNLSHEFIILAQTGESEVYCDRAYLDFPIPPGSTDFDDVAALQATVDHWTSRYAATSEMHEPERFAAVPEEARMAARGIEVGHIFYFGTKYSEPMGARVTGPDGQERPVHMGSYGIGPSRLVAAIIEASHDEAGIVWPDAVAPFDVGLLNLKTGDIATDAACARIQEQLEAAGLSVLYDDRDERPGAKFATADLIGLPWQVIVGPKGLAEGQVELKRRATGERETVAPDALAARLRRGAAG.

Belongs to the class-II aminoacyl-tRNA synthetase family. ProS type 2 subfamily. As to quaternary structure, homodimer.

It is found in the cytoplasm. The enzyme catalyses tRNA(Pro) + L-proline + ATP = L-prolyl-tRNA(Pro) + AMP + diphosphate. Its function is as follows. Catalyzes the attachment of proline to tRNA(Pro) in a two-step reaction: proline is first activated by ATP to form Pro-AMP and then transferred to the acceptor end of tRNA(Pro). The chain is Proline--tRNA ligase from Methylobacterium sp. (strain 4-46).